A 197-amino-acid chain; its full sequence is Ribosome biogenesis protein RLP24 (197 aa).

Residues 147–180 (KEQAAAEEVSEEESEEEEDMEVDSEEEEEEKLQK) form a disordered region. Residues 154–176 (EVSEEESEEEEDMEVDSEEEEEE) are compositionally biased toward acidic residues.

The protein belongs to the eukaryotic ribosomal protein eL24 family. In terms of assembly, associated with nucleolar and cytoplasmic pre-60S particles. At the end of biogenesis it dissociates from cytoplasmic pre-60S particles and is likely to be exchanged for its ribosomal homolog, RPL24.

Its subcellular location is the cytoplasm. It localises to the nucleus. Functionally, involved in the biogenesis of the 60S ribosomal subunit. Ensures the docking of NOG1 to pre-60S particles. Activates and recruits ATPase AFG2 to cytoplasmic pre-60S ribosomal particles. The sequence is that of Ribosome biogenesis protein RLP24 (RLP24) from Candida glabrata (strain ATCC 2001 / BCRC 20586 / JCM 3761 / NBRC 0622 / NRRL Y-65 / CBS 138) (Yeast).